A 406-amino-acid chain; its full sequence is Tryptophan 2,3-dioxygenase (406 aa).

Substrate-binding positions include 72 to 76 and arginine 144; that span reads FIVTH. Position 328 (histidine 328) interacts with heme. A substrate-binding site is contributed by threonine 342.

This sequence belongs to the tryptophan 2,3-dioxygenase family. In terms of assembly, homotetramer. Dimer of dimers. The cofactor is heme.

It catalyses the reaction L-tryptophan + O2 = N-formyl-L-kynurenine. It functions in the pathway amino-acid degradation; L-tryptophan degradation via kynurenine pathway; L-kynurenine from L-tryptophan: step 1/2. Heme-dependent dioxygenase that catalyzes the oxidative cleavage of the L-tryptophan (L-Trp) pyrrole ring and converts L-tryptophan to N-formyl-L-kynurenine. Catalyzes the oxidative cleavage of the indole moiety. The sequence is that of Tryptophan 2,3-dioxygenase from Xenopus tropicalis (Western clawed frog).